A 160-amino-acid chain; its full sequence is Small ribosomal subunit protein uS7 (160 aa).

It belongs to the universal ribosomal protein uS7 family. As to quaternary structure, part of the 30S ribosomal subunit. Contacts proteins S9 and S11.

Functionally, one of the primary rRNA binding proteins, it binds directly to 16S rRNA where it nucleates assembly of the head domain of the 30S subunit. Is located at the subunit interface close to the decoding center, probably blocks exit of the E-site tRNA. The polypeptide is Small ribosomal subunit protein uS7 (Rickettsia canadensis (strain McKiel)).